Consider the following 337-residue polypeptide: Probable phospholipase A1 magnifin (337 aa).

The first 21 residues, 1–21 (MNLKYLLLFFCLVQVLHYCYS), serve as a signal peptide directing secretion. Positions 22-33 (HGDPSLSNELDR) are excised as a propeptide. C39 and C123 are disulfide-bonded. S173 (nucleophile) is an active-site residue. Catalysis depends on D201, which acts as the Charge relay system. 2 disulfides stabilise this stretch: C212/C217 and C255/C264. H266 serves as the catalytic Charge relay system. Cystine bridges form between C281-C305, C282-C330, and C298-C303.

It belongs to the AB hydrolase superfamily. Lipase family. In terms of tissue distribution, expressed by the venom gland.

It is found in the secreted. The enzyme catalyses a 1,2-diacyl-sn-glycero-3-phosphocholine + H2O = a 2-acyl-sn-glycero-3-phosphocholine + a fatty acid + H(+). In terms of biological role, catalyzes the hydrolysis of phosphatidylcholine with phospholipase A1 activity. May act as an allergen and induce hemolytic activity. In vivo, induces dose-dependent platelet aggregation (nanomolar concentration) and induces thrombosis. The sequence is that of Probable phospholipase A1 magnifin from Vespa magnifica (Hornet).